Reading from the N-terminus, the 240-residue chain is C-type lectin domain family 4 member A (240 aa).

Residues 1–48 (MASEITYAEVRIKNESNSSVTYSGSPAAPREKPTRHLSKPGSLLVPFT) are Cytoplasmic-facing. The ITIM motif motif lies at 5–10 (ITYAEV). The interval 18–38 (SSVTYSGSPAAPREKPTRHLS) is disordered. The chain crosses the membrane as a helical; Signal-anchor for type II membrane protein span at residues 49–69 (SLMVLLLLLAITFLVAFIIYF). At 70-240 (QKYSQFLEEK…SVCQMKKIQL (171 aa)) the chain is on the extracellular side. Disulfide bonds link Cys107–Cys118, Cys140–Cys233, and Cys208–Cys225. Residues 129-235 (SKASWSESEK…SGKQQSVCQM (107 aa)) form the C-type lectin domain. Positions 149 and 155 each coordinate Ca(2+). Asn190 carries an N-linked (GlcNAc...) asparagine glycan. Residues Glu200, Ser202, and Glu206 each contribute to the Ca(2+) site. Alpha-D-mannopyranose is bound by residues 200 to 202 (EPS) and Glu206. N-acetyl-D-glucosamine is bound at residue 211 to 213 (INH). Asn221 and Asp222 together coordinate Ca(2+).

In terms of assembly, may interact with PTPN6 via its ITIM site. As to expression, expressed by myeloid cells (dendritic cells, macrophages, and neutrophils) and B-cells.

The protein localises to the cell membrane. Functionally, C-type lectin receptor that binds carbohydrates mannose and fucose but also weakly interacts with N-acetylglucosamine (GlcNAc) in a Ca(2+)-dependent manner. Involved in regulating immune reactivity. Once triggered by antigen, it is internalized by clathrin-dependent endocytosis and delivers its antigenic cargo into the antigen presentation pathway resulting in cross-priming of CD8(+) T cells. This cross-presentation and cross-priming are enhanced by TLR7 and TLR8 agonists with increased expansion of the CD8(+) T cells, high production of IFNG and TNF with reduced levels of IL4, IL5 and IL13. In plasmacytoid dendritic cells, inhibits TLR9-mediated IFNA and TNF production. May be involved via its ITIM motif (immunoreceptor tyrosine-based inhibitory motifs) in the inhibition of B-cell-receptor-mediated calcium mobilization and protein tyrosine phosphorylation. This Rattus norvegicus (Rat) protein is C-type lectin domain family 4 member A (Clec4a).